The following is a 337-amino-acid chain: Zinc finger protein Gfi-1b (337 aa).

The tract at residues 1–20 is mediates repression of transcription; the sequence is MPRSFLVKSKKAHTYHQHRF. An SNAG domain region spans residues 1-20; the sequence is MPRSFLVKSKKAHTYHQHRF. 6 consecutive C2H2-type zinc fingers follow at residues 170–193, 199–221, 227–249, 255–277, 283–305, and 311–334; these read YHCV…RRSH, FACE…TNIH, FECK…LLIH, YPCQ…TYIH, HKCQ…SRKH, and FSCE…ETQH.

As to expression, expressed in erythroid cells of primitive and definitive lineage and bone marrow cells.

It localises to the nucleus. Its function is as follows. Essential transcriptional regulator necessary for development and differentiation of erythroid and megakaryocytic lineages. Alters histone methylation by recruiting histone methyltransferase to target genes promoters. Plays a role in heterochromatin formation. In Gallus gallus (Chicken), this protein is Zinc finger protein Gfi-1b (GFI1B).